The chain runs to 318 residues: Transaldolase (318 aa).

The active-site Schiff-base intermediate with substrate is Lys-132.

This sequence belongs to the transaldolase family. Type 1 subfamily. As to quaternary structure, homodimer.

Its subcellular location is the cytoplasm. The enzyme catalyses D-sedoheptulose 7-phosphate + D-glyceraldehyde 3-phosphate = D-erythrose 4-phosphate + beta-D-fructose 6-phosphate. It participates in carbohydrate degradation; pentose phosphate pathway; D-glyceraldehyde 3-phosphate and beta-D-fructose 6-phosphate from D-ribose 5-phosphate and D-xylulose 5-phosphate (non-oxidative stage): step 2/3. Transaldolase is important for the balance of metabolites in the pentose-phosphate pathway. This Shewanella baltica (strain OS155 / ATCC BAA-1091) protein is Transaldolase.